The sequence spans 168 residues: Protein-export protein SecB (168 aa).

The protein belongs to the SecB family. In terms of assembly, homotetramer, a dimer of dimers. One homotetramer interacts with 1 SecA dimer.

The protein resides in the cytoplasm. Its function is as follows. One of the proteins required for the normal export of preproteins out of the cell cytoplasm. It is a molecular chaperone that binds to a subset of precursor proteins, maintaining them in a translocation-competent state. It also specifically binds to its receptor SecA. The chain is Protein-export protein SecB from Thioalkalivibrio sulfidiphilus (strain HL-EbGR7).